Consider the following 315-residue polypeptide: Ribosomal RNA small subunit methyltransferase H (315 aa).

Residues 33–35 (GGH), Asp-52, Phe-84, Asp-106, and Gln-113 contribute to the S-adenosyl-L-methionine site. Residues 294–315 (SSDELEENNRSHSAKLRVAEKL) form a disordered region.

It belongs to the methyltransferase superfamily. RsmH family.

Its subcellular location is the cytoplasm. It catalyses the reaction cytidine(1402) in 16S rRNA + S-adenosyl-L-methionine = N(4)-methylcytidine(1402) in 16S rRNA + S-adenosyl-L-homocysteine + H(+). Specifically methylates the N4 position of cytidine in position 1402 (C1402) of 16S rRNA. This is Ribosomal RNA small subunit methyltransferase H from Lactobacillus johnsonii (strain CNCM I-12250 / La1 / NCC 533).